Reading from the N-terminus, the 240-residue chain is Zinc import ATP-binding protein ZnuC (240 aa).

An ABC transporter domain is found at 1–219; the sequence is MSLLSIAALD…PAYRAMFGLD (219 aa). 36-43 provides a ligand contact to ATP; the sequence is GPNGSGKT.

It belongs to the ABC transporter superfamily. Zinc importer (TC 3.A.1.15.5) family. The complex is composed of two ATP-binding proteins (ZnuC), two transmembrane proteins (ZnuB) and a solute-binding protein (ZnuA).

It is found in the cell inner membrane. It carries out the reaction Zn(2+)(out) + ATP(in) + H2O(in) = Zn(2+)(in) + ADP(in) + phosphate(in) + H(+)(in). Its function is as follows. Part of the ABC transporter complex ZnuABC involved in zinc import. Responsible for energy coupling to the transport system. The sequence is that of Zinc import ATP-binding protein ZnuC from Chromohalobacter salexigens (strain ATCC BAA-138 / DSM 3043 / CIP 106854 / NCIMB 13768 / 1H11).